The primary structure comprises 360 residues: Dehydrogenase mokE (360 aa).

Position 50–53 (Ser50–Lys53) interacts with NADP(+). Substrate is bound at residue Ala134 to Leu141. Residues Ser173 to Thr176, Ser196 to Asn199, Tyr214, Leu261 to Asn262, and Thr279 each bind NADP(+). Gly281–Phe285 is a binding site for substrate. Leu350 to Ser351 is a binding site for NADP(+).

This sequence belongs to the zinc-containing alcohol dehydrogenase family. As to quaternary structure, monomer.

Its pathway is polyketide biosynthesis; lovastatin biosynthesis. Its function is as follows. Dehydrogenase; part of the gene cluster that mediates the biosynthesis of monakolin K, also known as lovastatin, and which acts as a potent competitive inhibitor of HMG-CoA reductase. Monakolin K biosynthesis is performed in two stages. The first stage is catalyzed by the nonaketide synthase mokA, which belongs to type I polyketide synthases and catalyzes the iterative nine-step formation of the polyketide. This PKS stage is completed by the action of dehydrogenase mokE, which catalyzes the NADPH-dependent reduction of the unsaturated tetra-, penta- and heptaketide intermediates that arise during the mokA-mediated biosynthesis of the nonaketide chain and leads to dihydromonacolin L. Covalently bound dihydromonacolin L is released from mokA by the mokD esterase. Conversion of dihydromonacolin L into monacolin L and then monacolin J is subsequently performed with the participation of molecular oxygen and P450 monoogygenase mokC. Finally, mokF performs the conversion of monacoline J to monacoline K through the addition of the side-chain diketide moiety (2R)-2-methylbutanoate produced by the diketide synthase mokB. The sequence is that of Dehydrogenase mokE from Monascus pilosus (Red mold).